The sequence spans 477 residues: PTS system MurNAc-GlcNAc-specific EIIBC component (477 aa).

The PTS EIIB type-1 domain occupies 5–87 (QQLAHHILDA…VKLSGVQLGE (83 aa)). Catalysis depends on cysteine 27, which acts as the Phosphocysteine intermediate; for EIIB activity. A disordered region spans residues 91 to 113 (HRSNTSNIKNQAQQNKREFQQKR). The span at 92–104 (RSNTSNIKNQAQQ) shows a compositional bias: polar residues. A PTS EIIC type-1 domain is found at 123 to 477 (KSIANIFIPL…EMRNLNKLGD (355 aa)). The next 10 membrane-spanning stretches (helical) occupy residues 128–148 (IFIP…IAAV), 167–187 (VAVL…FTGF), 192–212 (VFGA…LTGI), 227–247 (LIAG…LSII), 267–287 (ISLL…AGFI), 298–318 (VIGV…LPLV), 342–362 (LLPI…ALWV), 377–397 (ALPV…TLPL), 401–421 (FITA…IGHI), and 443–463 (LGYI…TYFF).

Its subcellular location is the cell membrane. It catalyses the reaction N-acetyl-beta-D-muramate-(1-&gt;4)-N-acetyl-D-glucosamine(out) + N(pros)-phospho-L-histidyl-[protein] = 6-phospho-N-acetyl-beta-D-muramate-(1-&gt;4)-N-acetyl-D-glucosamine(in) + L-histidyl-[protein]. The protein operates within cell wall biogenesis; peptidoglycan recycling. Functionally, the phosphoenolpyruvate-dependent sugar phosphotransferase system (sugar PTS), a major carbohydrate active transport system, catalyzes the phosphorylation of incoming sugar substrates concomitantly with their translocation across the cell membrane. This system is involved in the uptake and phosphorylation of MurNAc-GlcNAc, the principle peptidoglycan turnover product of S.aureus, yielding cytoplasmic MurNAc 6P-GlcNAc. This Staphylococcus haemolyticus (strain JCSC1435) protein is PTS system MurNAc-GlcNAc-specific EIIBC component.